Consider the following 91-residue polypeptide: Elongation factor 1-beta (91 aa).

This sequence belongs to the EF-1-beta/EF-1-delta family.

Functionally, promotes the exchange of GDP for GTP in EF-1-alpha/GDP, thus allowing the regeneration of EF-1-alpha/GTP that could then be used to form the ternary complex EF-1-alpha/GTP/AAtRNA. In Metallosphaera sedula (strain ATCC 51363 / DSM 5348 / JCM 9185 / NBRC 15509 / TH2), this protein is Elongation factor 1-beta.